The sequence spans 1026 residues: Cadherin-like and PC-esterase domain-containing protein 1 (1026 aa).

The signal sequence occupies residues methionine 1 to threonine 34. N-linked (GlcNAc...) asparagine glycosylation is found at asparagine 251, asparagine 404, asparagine 413, asparagine 737, asparagine 791, and asparagine 985.

Belongs to the PC-esterase family.

This chain is Cadherin-like and PC-esterase domain-containing protein 1 (CPED1), found in Homo sapiens (Human).